A 97-amino-acid chain; its full sequence is Ferredoxin-thioredoxin reductase, variable chain (97 aa).

This sequence belongs to the ferredoxin thioredoxin reductase alpha subunit family. In terms of assembly, heterodimer of subunit A (variable subunit) and subunit B (catalytic subunit). Heterodimeric FTR forms a complex with ferredoxin and thioredoxin.

Its subcellular location is the plastid. The protein localises to the chloroplast. Functionally, variable subunit of the ferredoxin-thioredoxin reductase (FTR), which catalyzes the two-electron reduction of thioredoxins by the electrons provided by reduced ferredoxin. The polypeptide is Ferredoxin-thioredoxin reductase, variable chain (Zea mays (Maize)).